A 529-amino-acid chain; its full sequence is Ectonucleoside triphosphate diphosphohydrolase 3 (529 aa).

Residues methionine 1–proline 22 are Cytoplasmic-facing. A helical transmembrane segment spans residues alanine 23–isoleucine 43. Topologically, residues glutamine 44–proline 485 are extracellular. N-linked (GlcNAc...) asparagine glycosylation occurs at asparagine 81. Cysteine 92 and cysteine 116 are joined by a disulfide. Asparagine 149 carries an N-linked (GlcNAc...) asparagine glycan. Residue glutamate 182 is the Proton acceptor of the active site. Glycine 222 to glutamine 226 lines the ATP pocket. Asparagine 238, asparagine 284, and asparagine 318 each carry an N-linked (GlcNAc...) asparagine glycan. 3 disulfide bridges follow: cysteine 261/cysteine 308, cysteine 289/cysteine 334, and cysteine 347/cysteine 353. Asparagine 381 and asparagine 392 each carry an N-linked (GlcNAc...) asparagine glycan. An intrachain disulfide couples cysteine 399 to cysteine 422. A glycan (N-linked (GlcNAc...) asparagine) is linked at asparagine 454. The helical transmembrane segment at valine 486–leucine 506 threads the bilayer. Residues tyrosine 507–aspartate 529 lie on the Cytoplasmic side of the membrane.

It belongs to the GDA1/CD39 NTPase family. It depends on Ca(2+) as a cofactor. Mg(2+) is required as a cofactor.

It is found in the cell membrane. It catalyses the reaction a ribonucleoside 5'-triphosphate + 2 H2O = a ribonucleoside 5'-phosphate + 2 phosphate + 2 H(+). Catalyzes the hydrolysis of nucleoside triphosphates and diphosphates. Has a threefold preference for the hydrolysis of ATP and UTP over ADP and UDP. The sequence is that of Ectonucleoside triphosphate diphosphohydrolase 3 from Mus musculus (Mouse).